Reading from the N-terminus, the 550-residue chain is Arginine--tRNA ligase (550 aa).

The short motif at 123-133 is the 'HIGH' region element; it reads ANPTGYLHIAH.

The protein belongs to the class-I aminoacyl-tRNA synthetase family. As to quaternary structure, monomer.

Its subcellular location is the cytoplasm. The enzyme catalyses tRNA(Arg) + L-arginine + ATP = L-arginyl-tRNA(Arg) + AMP + diphosphate. This is Arginine--tRNA ligase from Ureaplasma parvum serovar 3 (strain ATCC 27815 / 27 / NCTC 11736).